The chain runs to 1029 residues: Multidrug resistance protein MdtC (1029 aa).

11 consecutive transmembrane segments (helical) span residues 15-35 (ILLSIAVTLCGVLGFRLLPVA), 333-353 (EVEQSLAISVGLVILVVFLFL), 360-380 (LIPAVAVPVSLIGTFAAMYLC), 387-407 (LSLMALTIATGFVVDDAIVAL), 431-451 (VGFTVLSMSLSLVAVFLPLLL), 469-489 (VAIGISLVVSLTLTPMMCGWL), 528-548 (LVGLVLLATIALNVWLYISIP), 853-873 (VILILAAIATVYIVLGMLYES), 897-917 (AFDAPFSLIALIGIMLLIGIV), 953-973 (PIMMTTLAALFGALPLMIASG), and 984-1004 (ITIVGGLVMSQLLTLYTTPVV).

It belongs to the resistance-nodulation-cell division (RND) (TC 2.A.6) family. MdtC subfamily. In terms of assembly, part of a tripartite efflux system composed of MdtA, MdtB and MdtC. MdtC forms a heteromultimer with MdtB.

Its subcellular location is the cell inner membrane. The protein is Multidrug resistance protein MdtC of Cronobacter sakazakii (strain ATCC BAA-894) (Enterobacter sakazakii).